Here is a 382-residue protein sequence, read N- to C-terminus: uncharacterized protein (382 aa).

This is an uncharacterized protein from Methanocaldococcus jannaschii (strain ATCC 43067 / DSM 2661 / JAL-1 / JCM 10045 / NBRC 100440) (Methanococcus jannaschii).